The chain runs to 460 residues: Ribulose bisphosphate carboxylase large chain (460 aa).

K4 is modified (N6,N6,N6-trimethyllysine). Positions 113 and 163 each coordinate substrate. The active-site Proton acceptor is the K165. K167 serves as a coordination point for substrate. 3 residues coordinate Mg(2+): K191, D193, and E194. K191 carries the post-translational modification N6-carboxylysine. H284 serves as the catalytic Proton acceptor. Substrate-binding residues include R285, H317, and S369.

The protein belongs to the RuBisCO large chain family. Type I subfamily. In terms of assembly, heterohexadecamer of 8 large chains and 8 small chains. The cofactor is Mg(2+).

It is found in the plastid. It localises to the chloroplast. The enzyme catalyses 2 (2R)-3-phosphoglycerate + 2 H(+) = D-ribulose 1,5-bisphosphate + CO2 + H2O. It carries out the reaction D-ribulose 1,5-bisphosphate + O2 = 2-phosphoglycolate + (2R)-3-phosphoglycerate + 2 H(+). Its function is as follows. RuBisCO catalyzes two reactions: the carboxylation of D-ribulose 1,5-bisphosphate, the primary event in carbon dioxide fixation, as well as the oxidative fragmentation of the pentose substrate in the photorespiration process. Both reactions occur simultaneously and in competition at the same active site. In Cunninghamia lanceolata (China fir), this protein is Ribulose bisphosphate carboxylase large chain.